We begin with the raw amino-acid sequence, 405 residues long: Tyrosine--tRNA ligase (405 aa).

Residues 48–57 (PSRPDLHLGH) carry the 'HIGH' region motif. The 'KMSKS' region signature appears at 232–236 (KMSKS). Lys-235 is an ATP binding site. One can recognise an S4 RNA-binding domain in the interval 339-400 (LPLVDLLTTL…AGKRKFFRIA (62 aa)).

The protein belongs to the class-I aminoacyl-tRNA synthetase family. TyrS type 2 subfamily. In terms of assembly, homodimer.

The protein localises to the cytoplasm. The enzyme catalyses tRNA(Tyr) + L-tyrosine + ATP = L-tyrosyl-tRNA(Tyr) + AMP + diphosphate + H(+). Catalyzes the attachment of tyrosine to tRNA(Tyr) in a two-step reaction: tyrosine is first activated by ATP to form Tyr-AMP and then transferred to the acceptor end of tRNA(Tyr). This is Tyrosine--tRNA ligase from Chlorobium luteolum (strain DSM 273 / BCRC 81028 / 2530) (Pelodictyon luteolum).